The chain runs to 656 residues: Bifunctional protein ThiO/ThiG (656 aa).

Positions 1 to 395 are thiO; it reads MQTTSDVLII…HAAENSEGSK (395 aa). FAD-binding positions include 7–21 and 48–50; these read VLII…AIAV and AGM. Glu-56 contributes to the glycine binding site. Val-169 provides a ligand contact to FAD. Residues Arg-298 and Arg-324 each contribute to the glycine site. Position 322-328 (322-328) interacts with FAD; sequence HYRNGIL. Residues 396–656 form a thiG region; the sequence is DLLEIAGRKF…ASSPLTGLVG (261 aa). Lys-498 (schiff-base intermediate with DXP) is an active-site residue. Residues Gly-559, 585-586, and 607-608 contribute to the 1-deoxy-D-xylulose 5-phosphate site; these read AG and NS.

The protein in the N-terminal section; belongs to the DAO family. ThiO subfamily. This sequence in the C-terminal section; belongs to the ThiG family. As to quaternary structure, interacts with ThiH and ThiS. Requires FAD as cofactor.

The protein resides in the cytoplasm. It carries out the reaction glycine + O2 + H2O = glyoxylate + H2O2 + NH4(+). The catalysed reaction is [ThiS sulfur-carrier protein]-C-terminal-Gly-aminoethanethioate + 2-iminoacetate + 1-deoxy-D-xylulose 5-phosphate = [ThiS sulfur-carrier protein]-C-terminal Gly-Gly + 2-[(2R,5Z)-2-carboxy-4-methylthiazol-5(2H)-ylidene]ethyl phosphate + 2 H2O + H(+). Its pathway is cofactor biosynthesis; thiamine diphosphate biosynthesis. Its function is as follows. Catalyzes the FAD-dependent oxidative deamination of glycine. Is essential for thiamine biosynthesis since the oxidation of glycine catalyzed by ThiO generates the glycine imine intermediate (dehydroglycine) required for the biosynthesis of the thiazole ring of thiamine pyrophosphate. Catalyzes the rearrangement of 1-deoxy-D-xylulose 5-phosphate (DXP) to produce the thiazole phosphate moiety of thiamine. Sulfur is provided by the thiocarboxylate moiety of the carrier protein ThiS. In vitro, sulfur can be provided by H(2)S. This is Bifunctional protein ThiO/ThiG (thiO/thiG) from Synechocystis sp. (strain ATCC 27184 / PCC 6803 / Kazusa).